Here is a 357-residue protein sequence, read N- to C-terminus: Dihydroorotate dehydrogenase (quinone) (357 aa).

FMN contacts are provided by residues 61–65 and T85; that span reads AGFDK. K65 is a binding site for substrate. 110–114 lines the substrate pocket; that stretch reads NRFGF. FMN is bound by residues N141 and N172. N172 lines the substrate pocket. Catalysis depends on S175, which acts as the Nucleophile. Residue N177 participates in substrate binding. Residues K217 and G245 each coordinate FMN. 246–247 serves as a coordination point for substrate; sequence NT. Residues G268, G297, and 318–319 each bind FMN; that span reads YS.

It belongs to the dihydroorotate dehydrogenase family. Type 2 subfamily. Monomer. FMN serves as cofactor.

The protein resides in the cell membrane. The catalysed reaction is (S)-dihydroorotate + a quinone = orotate + a quinol. It functions in the pathway pyrimidine metabolism; UMP biosynthesis via de novo pathway; orotate from (S)-dihydroorotate (quinone route): step 1/1. In terms of biological role, catalyzes the conversion of dihydroorotate to orotate with quinone as electron acceptor. The chain is Dihydroorotate dehydrogenase (quinone) from Xanthobacter autotrophicus (strain ATCC BAA-1158 / Py2).